The sequence spans 294 residues: Acetylglutamate kinase (294 aa).

Residues Gly-63–Gly-64, Arg-85, and Asn-188 each bind substrate.

It belongs to the acetylglutamate kinase family. ArgB subfamily.

The protein resides in the cytoplasm. The catalysed reaction is N-acetyl-L-glutamate + ATP = N-acetyl-L-glutamyl 5-phosphate + ADP. It functions in the pathway amino-acid biosynthesis; L-arginine biosynthesis; N(2)-acetyl-L-ornithine from L-glutamate: step 2/4. Catalyzes the ATP-dependent phosphorylation of N-acetyl-L-glutamate. The sequence is that of Acetylglutamate kinase from Methanococcus maripaludis (strain C7 / ATCC BAA-1331).